The sequence spans 214 residues: Large ribosomal subunit protein uL3 (214 aa).

Residues 133–155 (ATHGNSRSHRVPGSTGQCQSPGR) are disordered. Gln151 bears the N5-methylglutamine mark.

Belongs to the universal ribosomal protein uL3 family. In terms of assembly, part of the 50S ribosomal subunit. Forms a cluster with proteins L14 and L19. Methylated by PrmB.

One of the primary rRNA binding proteins, it binds directly near the 3'-end of the 23S rRNA, where it nucleates assembly of the 50S subunit. The chain is Large ribosomal subunit protein uL3 from Cellvibrio japonicus (strain Ueda107) (Pseudomonas fluorescens subsp. cellulosa).